We begin with the raw amino-acid sequence, 269 residues long: Cytochrome c oxidase subunit 3 (269 aa).

The next 7 membrane-spanning stretches (helical) occupy residues 21-41 (PWPM…GLTM), 45-65 (IGNM…SVFW), 90-110 (GFLL…WAYF), 138-160 (PLLN…HALI), 167-187 (ALSG…CQYI), 205-225 (FYAG…MLII), and 247-267 (ILYC…FYWW).

Belongs to the cytochrome c oxidase subunit 3 family. In terms of assembly, component of the cytochrome c oxidase (complex IV, CIV), a multisubunit enzyme composed of a catalytic core of 3 subunits and several supernumerary subunits. The complex exists as a monomer or a dimer and forms supercomplexes (SCs) in the inner mitochondrial membrane with ubiquinol-cytochrome c oxidoreductase (cytochrome b-c1 complex, complex III, CIII).

It is found in the mitochondrion inner membrane. It carries out the reaction 4 Fe(II)-[cytochrome c] + O2 + 8 H(+)(in) = 4 Fe(III)-[cytochrome c] + 2 H2O + 4 H(+)(out). Component of the cytochrome c oxidase, the last enzyme in the mitochondrial electron transport chain which drives oxidative phosphorylation. The respiratory chain contains 3 multisubunit complexes succinate dehydrogenase (complex II, CII), ubiquinol-cytochrome c oxidoreductase (cytochrome b-c1 complex, complex III, CIII) and cytochrome c oxidase (complex IV, CIV), that cooperate to transfer electrons derived from NADH and succinate to molecular oxygen, creating an electrochemical gradient over the inner membrane that drives transmembrane transport and the ATP synthase. Cytochrome c oxidase is the component of the respiratory chain that catalyzes the reduction of oxygen to water. Electrons originating from reduced cytochrome c in the intermembrane space (IMS) are transferred via the dinuclear copper A center (CU(A)) of subunit 2 and heme A of subunit 1 to the active site in subunit 1, a binuclear center (BNC) formed by heme A3 and copper B (CU(B)). The BNC reduces molecular oxygen to 2 water molecules using 4 electrons from cytochrome c in the IMS and 4 protons from the mitochondrial matrix. The chain is Cytochrome c oxidase subunit 3 (COX3) from Candida glabrata (strain ATCC 2001 / BCRC 20586 / JCM 3761 / NBRC 0622 / NRRL Y-65 / CBS 138) (Yeast).